Here is a 1331-residue protein sequence, read N- to C-terminus: Sodium-dependent transporter bedraggled (1331 aa).

A disordered region spans residues 1–62 (MSSKEQQAAG…QLEHEQFGLS (62 aa)). The span at 16–25 (NSNAYSSLPP) shows a compositional bias: polar residues. Residues 28-43 (TGAGCSGAALGSGTGT) show a composition bias toward gly residues. N-linked (GlcNAc...) asparagine glycosylation is present at N168. 2 disordered regions span residues 221-284 (EPRT…TEPV) and 363-473 (QTNA…SASS). A compositionally biased stretch (polar residues) spans 258–282 (KTFSCSLRPTSQIASSSGSLETSTE). The segment covering 369 to 383 (SSEEPRPRQYGRRLE) has biased composition (basic and acidic residues). The span at 413–436 (LQDTPTHPIMSTCSELSSARSSRM) shows a compositional bias: polar residues. Low complexity predominate over residues 437-453 (PSPVSLPSDSSSSGSSS). Polar residues predominate over residues 463-473 (VQTTTMCSASS). Helical transmembrane passes span 505-525 (LALI…VLTI), 531-551 (FLLQ…WLQM), and 567-587 (ISPI…FLAL). 2 N-linked (GlcNAc...) asparagine glycosylation sites follow: N627 and N631. A run of 4 helical transmembrane segments spans residues 667–687 (QLAF…CKGL), 696–716 (IIYT…VYVV), 741–761 (TAAT…VIAI), and 778–798 (AILL…LALC). The N-linked (GlcNAc...) asparagine glycan is linked to N857. Residues 890 to 910 (WVWAAVAFATFAGFGLAQLCV) form a helical membrane-spanning segment. N921 carries an N-linked (GlcNAc...) asparagine glycan. 4 consecutive transmembrane segments (helical) span residues 926–946 (VLLS…EMGI), 956–976 (LGGS…VFLI), 998–1018 (AFLA…LSVV), and 1044–1064 (MGSL…IIQI). Disordered stretches follow at residues 1086–1136 (PEEG…SYTT), 1169–1238 (SLDA…ASTL), and 1256–1275 (VRHR…TLPR). Polar residues-rich tracts occupy residues 1097–1115 (ARQT…TTEG) and 1186–1196 (ILTNPAGSSFN). The span at 1197–1209 (ADPSPASSSSPES) shows a compositional bias: low complexity.

The protein belongs to the sodium:neurotransmitter symporter (SNF) (TC 2.A.22) family.

Its subcellular location is the membrane. Functionally, putative sodium-dependent transporter which is required for viability, early imaginal disk development and adult motor coordination. Also has a role in the fate commitment of the R3/R4 photoreceptor cells. May function in ommatidial polarity by regulating the activity of the core polarity genes, acting upstream of (or in parallel to) Vang, dsh, pk, stan, and dgo, but downstream or independently of fz. This Drosophila melanogaster (Fruit fly) protein is Sodium-dependent transporter bedraggled.